The primary structure comprises 469 residues: Cysteine--tRNA ligase (469 aa).

Residue Cys-29 coordinates Zn(2+). A 'HIGH' region motif is present at residues 31-41; it reads PTVYNYIHIGN. Positions 210, 235, and 239 each coordinate Zn(2+). A 'KMSKS' region motif is present at residues 267-271; the sequence is KMSKS. Lys-270 contributes to the ATP binding site.

It belongs to the class-I aminoacyl-tRNA synthetase family. As to quaternary structure, monomer. Zn(2+) is required as a cofactor.

The protein resides in the cytoplasm. It carries out the reaction tRNA(Cys) + L-cysteine + ATP = L-cysteinyl-tRNA(Cys) + AMP + diphosphate. In Thermosipho africanus (strain TCF52B), this protein is Cysteine--tRNA ligase.